A 160-amino-acid polypeptide reads, in one-letter code: Periplasmic nitrate reductase, electron transfer subunit (160 aa).

The signal sequence occupies residues M1–A25. Residues H73, C87, C90, H91, H108, C127, C130, and H131 each contribute to the heme c site.

It belongs to the NapB family. Component of the periplasmic nitrate reductase NapAB complex composed of NapA and NapB. Post-translationally, binds 2 heme C groups per subunit.

Its subcellular location is the periplasm. Its function is as follows. Electron transfer subunit of the periplasmic nitrate reductase complex NapAB. Receives electrons from the membrane-anchored tetraheme c-type NapC protein and transfers these to NapA subunit, thus allowing electron flow between membrane and periplasm. Essential for periplasmic nitrate reduction with nitrate as the terminal electron acceptor. The chain is Periplasmic nitrate reductase, electron transfer subunit from Azospirillum brasilense.